Consider the following 308-residue polypeptide: 4-hydroxyproline 2-epimerase (308 aa).

The active-site Proton acceptor is the Cys88. Substrate-binding positions include 89–90, His208, and Asp232; that span reads GH. Cys236 (proton donor) is an active-site residue. Residue 237 to 238 participates in substrate binding; sequence GT.

This sequence belongs to the proline racemase family.

It catalyses the reaction trans-4-hydroxy-L-proline = cis-4-hydroxy-D-proline. Its function is as follows. Catalyzes the epimerization of trans-4-hydroxy-L-proline (t4LHyp) to cis-4-hydroxy-D-proline (c4DHyp). Is likely involved in a degradation pathway that converts t4LHyp to alpha-ketoglutarate. Can also catalyze the epimerization of trans-3-hydroxy-L-proline (t3LHyp) to cis-3-hydroxy-D-proline (c3DHyp), albeit with 200-fold lower efficiency. The chain is 4-hydroxyproline 2-epimerase from Pseudomonas putida (strain ATCC 700007 / DSM 6899 / JCM 31910 / BCRC 17059 / LMG 24140 / F1).